A 786-amino-acid chain; its full sequence is Protein RDM16 (786 aa).

Basic and acidic residues-rich tracts occupy residues 1–80 (MDKE…SRDR), 87–112 (RSHEGSKEKESRSKRKDREEENGARD), and 123–143 (NGERRSRFEDVAIEVENKDAQ). 4 disordered regions span residues 1 to 223 (MDKE…SANL), 255 to 283 (KKATKPTSEGSPHTRVPPSTTTPAVSTGT), 532 to 557 (RPIEPPAEAAPPPPQPLKLTKKEQKK), and 616 to 642 (EREQAHTDRNAARKLTPAEKREKKERK). The span at 145-164 (SEGSGATNPTSGVTMGASTY) shows a compositional bias: polar residues. Residues 165 to 176 (SSIPSEASAAPS) are compositionally biased toward low complexity. Residues 177–189 (QTLLTKVSSISTT) are compositionally biased toward polar residues. Basic and acidic residues predominate over residues 190–203 (DENKASVVRSHEVP). Residues 268 to 283 (TRVPPSTTTPAVSTGT) are compositionally biased toward low complexity. Over residues 534-547 (IEPPAEAAPPPPQP) the composition is skewed to pro residues.

It localises to the nucleus. Its subcellular location is the nucleoplasm. Functionally, functions in the RNA-directed DNA methylation (RdDM) pathway. Acts as a pre-mRNA splicing factor, likely by affecting Pol V transcripts. Affects DNA methylation of transposable elements (TEs) and preferentially influences NRPD1- and ROS1-targeted loci. This Arabidopsis thaliana (Mouse-ear cress) protein is Protein RDM16.